We begin with the raw amino-acid sequence, 322 residues long: SUMO-activating enzyme subunit 1A (322 aa).

Met-1 carries the post-translational modification N-acetylmethionine.

Belongs to the ubiquitin-activating E1 family. In terms of assembly, heterodimer of SAE1A or SAE1B and SAE2. The complex binds SUMO proteins via SAE2.

Its subcellular location is the nucleus. Its pathway is protein modification; protein sumoylation. Its function is as follows. The dimeric enzyme acts as an E1 ligase for SUMO1 and SUMO2. It mediates ATP-dependent activation of SUMO proteins and formation of a thioester with a conserved cysteine residue on SAE2. Functionally redundant with its paralog SAE1B. The protein is SUMO-activating enzyme subunit 1A (SAE1A) of Arabidopsis thaliana (Mouse-ear cress).